We begin with the raw amino-acid sequence, 277 residues long: 4-hydroxy-3-methylbut-2-enyl diphosphate reductase (277 aa).

Cys-12 serves as a coordination point for [4Fe-4S] cluster. Residues His-36 and His-70 each contribute to the (2E)-4-hydroxy-3-methylbut-2-enyl diphosphate site. Dimethylallyl diphosphate contacts are provided by His-36 and His-70. Isopentenyl diphosphate is bound by residues His-36 and His-70. Residue Cys-92 participates in [4Fe-4S] cluster binding. His-120 contributes to the (2E)-4-hydroxy-3-methylbut-2-enyl diphosphate binding site. Residue His-120 coordinates dimethylallyl diphosphate. Residue His-120 participates in isopentenyl diphosphate binding. The active-site Proton donor is Glu-122. Thr-158 serves as a coordination point for (2E)-4-hydroxy-3-methylbut-2-enyl diphosphate. Cys-186 provides a ligand contact to [4Fe-4S] cluster. Positions 214, 216, and 258 each coordinate (2E)-4-hydroxy-3-methylbut-2-enyl diphosphate. Ser-214, Asn-216, and Ser-258 together coordinate dimethylallyl diphosphate. Isopentenyl diphosphate-binding residues include Ser-214, Asn-216, and Ser-258.

The protein belongs to the IspH family. Requires [4Fe-4S] cluster as cofactor.

The enzyme catalyses isopentenyl diphosphate + 2 oxidized [2Fe-2S]-[ferredoxin] + H2O = (2E)-4-hydroxy-3-methylbut-2-enyl diphosphate + 2 reduced [2Fe-2S]-[ferredoxin] + 2 H(+). It catalyses the reaction dimethylallyl diphosphate + 2 oxidized [2Fe-2S]-[ferredoxin] + H2O = (2E)-4-hydroxy-3-methylbut-2-enyl diphosphate + 2 reduced [2Fe-2S]-[ferredoxin] + 2 H(+). It participates in isoprenoid biosynthesis; dimethylallyl diphosphate biosynthesis; dimethylallyl diphosphate from (2E)-4-hydroxy-3-methylbutenyl diphosphate: step 1/1. It functions in the pathway isoprenoid biosynthesis; isopentenyl diphosphate biosynthesis via DXP pathway; isopentenyl diphosphate from 1-deoxy-D-xylulose 5-phosphate: step 6/6. Its function is as follows. Catalyzes the conversion of 1-hydroxy-2-methyl-2-(E)-butenyl 4-diphosphate (HMBPP) into a mixture of isopentenyl diphosphate (IPP) and dimethylallyl diphosphate (DMAPP). Acts in the terminal step of the DOXP/MEP pathway for isoprenoid precursor biosynthesis. In Campylobacter jejuni subsp. doylei (strain ATCC BAA-1458 / RM4099 / 269.97), this protein is 4-hydroxy-3-methylbut-2-enyl diphosphate reductase.